The chain runs to 331 residues: UPF0194 membrane protein YbhG (331 aa).

The first 19 residues, 1–19 (MKKPVVIGLVIAAIVAVIA), serve as a signal peptide directing secretion. Residues 140–209 (RTISANDLEN…DLQDTTLIAP (70 aa)) are a coiled coil.

It belongs to the UPF0194 family.

It localises to the periplasm. In Salmonella typhi, this protein is UPF0194 membrane protein YbhG (ybhG).